We begin with the raw amino-acid sequence, 235 residues long: Large ribosomal subunit protein uL1 (235 aa).

Belongs to the universal ribosomal protein uL1 family. In terms of assembly, part of the 50S ribosomal subunit.

Its function is as follows. Binds directly to 23S rRNA. The L1 stalk is quite mobile in the ribosome, and is involved in E site tRNA release. In terms of biological role, protein L1 is also a translational repressor protein, it controls the translation of the L11 operon by binding to its mRNA. The chain is Large ribosomal subunit protein uL1 from Fervidobacterium nodosum (strain ATCC 35602 / DSM 5306 / Rt17-B1).